Consider the following 1192-residue polypeptide: Coiled-coil domain-containing protein 40 (1192 aa).

Disordered stretches follow at residues M1–D78, K126–S153, S173–A196, E211–D246, and G261–R289. A compositionally biased stretch (acidic residues) spans P27 to F45. Residues P215–A228 show a composition bias toward pro residues. The segment covering D267 to P279 has biased composition (acidic residues). A Phosphoserine modification is found at S306. 7 coiled-coil regions span residues E308–Q369, K425–L451, D581–K649, N733–R768, L830–H871, L919–S972, and Q1044–L1118.

Belongs to the CCDC40 family. As to expression, specifically expressed in the embryonic node and midline.

Its subcellular location is the cytoplasm. It is found in the cell projection. The protein localises to the cilium. Its function is as follows. Required for assembly of dynein regulatory complex (DRC) and inner dynein arm (IDA) complexes, which are responsible for ciliary beat regulation, thereby playing a central role in motility in cilia and flagella. Probably acts together with CCDC39 to form a molecular ruler that determines the 96 nanometer (nm) repeat length and arrangements of components in cilia and flagella. Not required for outer dynein arm complexes assembly. Required for axonemal recruitment of CCDC39. The protein is Coiled-coil domain-containing protein 40 of Mus musculus (Mouse).